The sequence spans 240 residues: Uridylate kinase (240 aa).

13–16 (KASG) provides a ligand contact to ATP. The interval 21-26 (GSQGFG) is involved in allosteric activation by GTP. Position 55 (G55) interacts with UMP. ATP contacts are provided by G56 and R60. Residues D75 and 136–143 (TGNPFFTT) each bind UMP. Residues T163, Q164, Y169, and D172 each coordinate ATP.

It belongs to the UMP kinase family. In terms of assembly, homohexamer.

It is found in the cytoplasm. It catalyses the reaction UMP + ATP = UDP + ADP. It participates in pyrimidine metabolism; CTP biosynthesis via de novo pathway; UDP from UMP (UMPK route): step 1/1. Its activity is regulated as follows. Allosterically activated by GTP. Inhibited by UTP. In terms of biological role, catalyzes the reversible phosphorylation of UMP to UDP. This Brucella abortus biovar 1 (strain 9-941) protein is Uridylate kinase.